A 201-amino-acid polypeptide reads, in one-letter code: Small ribosomal subunit protein uS4 (201 aa).

The 61-residue stretch at 91-151 (SRLDNVVYRA…EKSRSMLWFE (61 aa)) folds into the S4 RNA-binding domain.

It belongs to the universal ribosomal protein uS4 family. In terms of assembly, part of the 30S ribosomal subunit. Contacts protein S5. The interaction surface between S4 and S5 is involved in control of translational fidelity.

Its function is as follows. One of the primary rRNA binding proteins, it binds directly to 16S rRNA where it nucleates assembly of the body of the 30S subunit. With S5 and S12 plays an important role in translational accuracy. The polypeptide is Small ribosomal subunit protein uS4 (Corynebacterium jeikeium (strain K411)).